The following is a 123-amino-acid chain: MPSTGTLVIIFAIVLILCIMLLFFYKTVEAGKPSVLPPPIPPPTPPPSKKKYDHNEYMEKTDLEPEVKKNHRKWANEAEHLISSSVKGLENLDEAAFLANHKGHGFRTFEHAKSLFKEFLKKY.

The chain crosses the membrane as a helical span at residues 5 to 25 (GTLVIIFAIVLILCIMLLFFY). The segment at 32–53 (KPSVLPPPIPPPTPPPSKKKYD) is disordered. Positions 35–47 (VLPPPIPPPTPPP) are enriched in pro residues.

The protein belongs to the asfivirus CP123L family.

Its subcellular location is the host membrane. The protein localises to the virion. This is an uncharacterized protein from Ornithodoros (relapsing fever ticks).